We begin with the raw amino-acid sequence, 707 residues long: tRNA 5-methylaminomethyl-2-thiouridine biosynthesis bifunctional protein MnmC (707 aa).

Residues 1-264 (MTKKLEHEYI…KREMLFGTFE (264 aa)) are tRNA (mnm(5)s(2)U34)-methyltransferase. Residues 312–707 (IGGGLAGAHA…LFRDLTRNRI (396 aa)) form an FAD-dependent cmnm(5)s(2)U34 oxidoreductase region.

The protein in the N-terminal section; belongs to the methyltransferase superfamily. tRNA (mnm(5)s(2)U34)-methyltransferase family. It in the C-terminal section; belongs to the DAO family. FAD is required as a cofactor.

It is found in the cytoplasm. The enzyme catalyses 5-aminomethyl-2-thiouridine(34) in tRNA + S-adenosyl-L-methionine = 5-methylaminomethyl-2-thiouridine(34) in tRNA + S-adenosyl-L-homocysteine + H(+). Catalyzes the last two steps in the biosynthesis of 5-methylaminomethyl-2-thiouridine (mnm(5)s(2)U) at the wobble position (U34) in tRNA. Catalyzes the FAD-dependent demodification of cmnm(5)s(2)U34 to nm(5)s(2)U34, followed by the transfer of a methyl group from S-adenosyl-L-methionine to nm(5)s(2)U34, to form mnm(5)s(2)U34. The sequence is that of tRNA 5-methylaminomethyl-2-thiouridine biosynthesis bifunctional protein MnmC from Saccharophagus degradans (strain 2-40 / ATCC 43961 / DSM 17024).